Here is a 62-residue protein sequence, read N- to C-terminus: Cecropin-D (62 aa).

The first 22 residues, 1 to 22, serve as a signal peptide directing secretion; sequence MNFTKILFFVVACVFAMRTVSA. Positions 23–24 are cleaved as a propeptide — removed by a dipeptidylpeptidase; sequence AP. Position 60 is a lysine amide (Lys60).

It belongs to the cecropin family.

It localises to the secreted. Its function is as follows. Cecropins have lytic and antibacterial activity against several Gram-positive and Gram-negative bacteria. In Hyalophora cecropia (Cecropia moth), this protein is Cecropin-D.